The chain runs to 138 residues: MIVNSCQLNVVSVEKSIFSGVIKKIYVMGVEGELGIFPGHSPLLTLIKPGLLKIFQVYNNEYLYLSGGILEVQPTVITILADVAIRAKDLDEKKVRDSKRLSEEKIKKMRHGDVDYIKISMEISKAIAQLRLIELTKK.

The protein belongs to the ATPase epsilon chain family. As to quaternary structure, F-type ATPases have 2 components, CF(1) - the catalytic core - and CF(0) - the membrane proton channel. CF(1) has five subunits: alpha(3), beta(3), gamma(1), delta(1), epsilon(1). CF(0) has three main subunits: a, b and c.

The protein localises to the cell inner membrane. Functionally, produces ATP from ADP in the presence of a proton gradient across the membrane. This chain is ATP synthase epsilon chain, found in Blochmanniella floridana.